Reading from the N-terminus, the 598-residue chain is (+)-bornyl diphosphate synthase, chloroplastic (598 aa).

The transit peptide at 1 to 54 directs the protein to the chloroplast; that stretch reads MSIISMNVSILSKPLNCLHNLERRPSKALLVPCTAPTARLRASCSSKLQEAHQI. Substrate is bound at residue Arg314. Residues Asp351 and Asp355 each contribute to the Mg(2+) site. The DDXXD motif signature appears at 351 to 355; sequence DDIYD. Arg493 provides a ligand contact to substrate. Mg(2+) contacts are provided by Asp496, Thr500, and Glu504. A substrate-binding site is contributed by Thr500. Residue Lys512 coordinates substrate.

The protein belongs to the terpene synthase family. In terms of assembly, homodimer. Requires Mg(2+) as cofactor.

It localises to the plastid. The protein localises to the chloroplast. It catalyses the reaction (2E)-geranyl diphosphate = (2S,4R)-bornyl diphosphate. The enzyme catalyses (2E)-geranyl diphosphate = (1R,4S)-camphene + diphosphate. The catalysed reaction is (2E)-geranyl diphosphate = (1R,5R)-alpha-pinene + diphosphate. The protein operates within terpene metabolism; (R)-camphor biosynthesis. Its function is as follows. Catalyzes the formation of the (+)-camphor precursor (+)-bornyl diphosphate from geranyl diphosphate. The enzyme also produces significant amounts of (+)-alpha-pinene, (+)-camphene, and (+-)-limonene. The protein is (+)-bornyl diphosphate synthase, chloroplastic of Salvia officinalis (Sage).